Here is a 507-residue protein sequence, read N- to C-terminus: Eukaryotic translation initiation factor 4E-binding protein Mextli homolog (507 aa).

Residues 126–163 are disordered; it reads RPEGQHDPAPTVGIPPSATSPPTQVTSSVTSPVPSSPQ. Residues 140-158 are compositionally biased toward low complexity; the sequence is PPSATSPPTQVTSSVTSPV. In terms of domain architecture, KH spans 242-307; it reads QLRHEMIIRN…EDIERAKDMI (66 aa). Disordered stretches follow at residues 314-360 and 395-424; these read NMSP…DEDI and ARPSAEEREKKKERRKSMPLQQTARDQQEP. A compositionally biased stretch (polar residues) spans 329 to 348; the sequence is QYSGMSSENQSIPSQQNTAN. Acidic residues predominate over residues 349–360; that stretch reads IDEDDDDDDEDI.

As to quaternary structure, interacts with eukaryotic translation initiation factor ife-3.

It is found in the cytoplasm. Functionally, plays a role in promoting translation. The protein is Eukaryotic translation initiation factor 4E-binding protein Mextli homolog of Caenorhabditis elegans.